The following is a 660-amino-acid chain: MRLPAGRHIRSIDAPIVPQSGRADTLDTLANRRLAGPDQEIPISSFADKTFTAPAQIRNFCIIAHIDHGKSTLADRMLQLTGVVDERSMRAQYLDRMDIERERGITIKAQNVRLPWQVSGGEDAGKEFVLHLIDTPGHVDFTYEVSRALEACEGAVLLVDAAQGIEAQTLANLYLALDRDLTIIPVLNKIDLPAADPDRYAGELAHIIGCEPDDVLWVSGKTGEGVARLLDEVVRQVPPPQGQADAPLRAMIFDSVYDIYRGVVTYVRVVDGKITPRERIAMMSTGATHELLEVGIVSPEPKASDGLGVGEVGYLITGVKDVRQSKVGDTVTSARHGAQEALTGYREPKPMVYSGLYPVDGSDYPDLRDALDRLRLNDAALTYEPETSVALGCGFRCGFLGLLHMEITRERLEREFDLDLISTSPNVVYRVIKEDGTEIVVTNPSDWPEGKVRTVYEPVVKTTIIAPSEFIGTIMELCQSRRGELGGMDYLSPERVELRYTMPLGEIIFDFFDSLKSRTRGYASLDYEEAGEQEAQLVKVDILLQGEAVDAFSAIVHKDAAFAYGNKMTTKLKELIPRQQFEVPVQAAIGSKIIARENIRAIRKDVLSKCYGGDITRKRKLLEKQKEGKKRMKTIGRVDVPQEAFVAALSADAAGDKSKK.

Residues 55–241 (AQIRNFCIIA…EVVRQVPPPQ (187 aa)) enclose the tr-type G domain. Residues 67–72 (DHGKST) and 188–191 (NKID) each bind GTP.

This sequence belongs to the TRAFAC class translation factor GTPase superfamily. Classic translation factor GTPase family. LepA subfamily.

The protein localises to the cell membrane. It carries out the reaction GTP + H2O = GDP + phosphate + H(+). Required for accurate and efficient protein synthesis under certain stress conditions. May act as a fidelity factor of the translation reaction, by catalyzing a one-codon backward translocation of tRNAs on improperly translocated ribosomes. Back-translocation proceeds from a post-translocation (POST) complex to a pre-translocation (PRE) complex, thus giving elongation factor G a second chance to translocate the tRNAs correctly. Binds to ribosomes in a GTP-dependent manner. This is Elongation factor 4 from Mycolicibacterium paratuberculosis (strain ATCC BAA-968 / K-10) (Mycobacterium paratuberculosis).